The primary structure comprises 167 residues: Leukotoxin-activating lysine-acyltransferase LktC serotype T3 (167 aa).

Residues histidine 22 and aspartate 91 contribute to the active site.

It belongs to the RTX toxin acyltransferase family.

The protein resides in the cytoplasm. The catalysed reaction is a fatty acyl-[ACP] + L-lysyl-[protein] = N(6)-(fatty acyl)-L-lysyl-[protein] + holo-[ACP] + H(+). Its function is as follows. Involved in fatty acylation of the protoxin (LktA) at two internal lysine residues, thereby converting it to the active toxin. The sequence is that of Leukotoxin-activating lysine-acyltransferase LktC serotype T3 (lktC) from Mannheimia haemolytica (Pasteurella haemolytica).